We begin with the raw amino-acid sequence, 933 residues long: Neuronal PAS domain-containing protein 4A (933 aa).

Residues 1 to 13 (MYRSTKGASKARR) are basic motif; degenerate. The 53-residue stretch at 1–53 (MYRSTKGASKARRDQINAEIRNLKDLLPISDADKSRLSYLHIMSLACMYTRKS) folds into the bHLH domain. Positions 14–53 (DQINAEIRNLKDLLPISDADKSRLSYLHIMSLACMYTRKS) are helix-loop-helix motif. 2 PAS domains span residues 74–148 (SFYE…PDTD) and 220–290 (TSAS…LREG). The PAC domain maps to 295 to 334 (AEMVVRVETADHSWVWLYMVLQLETGETPIVSNNYIISET). Residues 361 to 398 (QESVSLQSPETLSSPDQVFTPGSSGLSGQSFDFSTAAC) show a composition bias toward polar residues. Disordered regions lie at residues 361–451 (QESV…ASSP), 514–573 (GSNF…LSSL), and 750–776 (DLSS…PSTP). Low complexity-rich tracts occupy residues 399-411 (STGS…GSSS), 440-451 (EPMASPSSASSP), 538-560 (GQTA…SNPQ), and 751-769 (LSSS…HSSP).

Efficient DNA binding requires dimerization with another bHLH protein. As to expression, brain-specific.

It localises to the nucleus. In terms of biological role, transcription factor expressed in neurons of the brain that regulates the excitatory-inhibitory balance within neural circuits and is required for contextual memory in the hippocampus. Plays a key role in the structural and functional plasticity of neurons. Acts as an early-response transcription factor in both excitatory and inhibitory neurons, where it induces distinct but overlapping sets of late-response genes in these two types of neurons, allowing the synapses that form on inhibitory and excitatory neurons to be modified by neuronal activity in a manner specific to their function within a circuit, thereby facilitating appropriate circuit responses to sensory experience. The protein is Neuronal PAS domain-containing protein 4A (npas4a) of Danio rerio (Zebrafish).